The sequence spans 778 residues: Endonuclease MutS2 (778 aa).

328-335 (GPNTGGKT) is an ATP binding site. The Smr domain occupies 702–777 (LDLRGKRYEE…GSGATIVTFK (76 aa)).

This sequence belongs to the DNA mismatch repair MutS family. MutS2 subfamily. Homodimer. Binds to stalled ribosomes, contacting rRNA.

In terms of biological role, endonuclease that is involved in the suppression of homologous recombination and thus may have a key role in the control of bacterial genetic diversity. Functionally, acts as a ribosome collision sensor, splitting the ribosome into its 2 subunits. Detects stalled/collided 70S ribosomes which it binds and splits by an ATP-hydrolysis driven conformational change. Acts upstream of the ribosome quality control system (RQC), a ribosome-associated complex that mediates the extraction of incompletely synthesized nascent chains from stalled ribosomes and their subsequent degradation. Probably generates substrates for RQC. This Streptococcus pneumoniae (strain CGSP14) protein is Endonuclease MutS2.